A 306-amino-acid chain; its full sequence is Ornithine carbamoyltransferase (306 aa).

Carbamoyl phosphate contacts are provided by residues 53-56, Gln-80, Arg-104, and 131-134; these read STRT and HPCQ. Residues Asn-162, Asp-219, and 223–224 each bind L-ornithine; that span reads SM. Carbamoyl phosphate is bound by residues 259–260 and Arg-287; that span reads CL.

The protein belongs to the aspartate/ornithine carbamoyltransferase superfamily. OTCase family.

It is found in the cytoplasm. It carries out the reaction carbamoyl phosphate + L-ornithine = L-citrulline + phosphate + H(+). The protein operates within amino-acid biosynthesis; L-arginine biosynthesis; L-arginine from L-ornithine and carbamoyl phosphate: step 1/3. Functionally, reversibly catalyzes the transfer of the carbamoyl group from carbamoyl phosphate (CP) to the N(epsilon) atom of ornithine (ORN) to produce L-citrulline. This Acinetobacter baylyi (strain ATCC 33305 / BD413 / ADP1) protein is Ornithine carbamoyltransferase.